Here is a 349-residue protein sequence, read N- to C-terminus: DNA fragmentation factor subunit beta (349 aa).

The region spanning 7 to 83 is the CIDE-N domain; the sequence is QPKCVKLRAL…LLTAGETWHG (77 aa). Residues 319–349 are disordered; sequence RSRIYRPQTGSRRKQPPRKQPPRKRPPRKRQ. The segment covering 329–349 has biased composition (basic residues); the sequence is SRRKQPPRKQPPRKRPPRKRQ.

As to quaternary structure, heterodimer of DFFA and DFFB. Interacts with H1-1.

It is found in the cytoplasm. It localises to the nucleus. Its activity is regulated as follows. Inhibited by DFFA (DFF45). In terms of biological role, nuclease that induces DNA fragmentation and chromatin condensation during apoptosis. Degrades naked DNA and induces apoptotic morphology. The polypeptide is DNA fragmentation factor subunit beta (Dffb) (Rattus norvegicus (Rat)).